A 91-amino-acid polypeptide reads, in one-letter code: Conotoxin VnMKLT1-021 (91 aa).

An N-terminal signal peptide occupies residues 1-22 (MKLTCVMIVAVLFLTAWTFVTA). Positions 23–57 (DDPRDGPDTAVGWRKLFSEARDEMKNREASKLNER) are excised as a propeptide. Cystine bridges form between cysteine 59–cysteine 78, cysteine 66–cysteine 82, and cysteine 77–cysteine 86.

This sequence belongs to the conotoxin O1 superfamily. In terms of tissue distribution, expressed by the venom duct.

The protein resides in the secreted. This chain is Conotoxin VnMKLT1-021, found in Conus ventricosus (Mediterranean cone).